Reading from the N-terminus, the 359-residue chain is MEISKYKAVLALVMLQFTSAGVALFTKAAFMEGLNPTVFVVYRQAIATLFICPISFISAWRKENKPSLGVRGFWWVALTAVIGVTVNQNAYFKGIDLSSSSMACAMTNLIPAVTFIISIIVGFESIKRRSMKSVAKVIGTGVCVGGAMAMTFLRGPKLLNALLNQDNTAWLLGCFFLLISTFAWSLWLILQVPIASHCPDHLYTSACTCFIATIASFLVALALGNTHLPPWKLDSFLKLSCCIYSGFQLAISFFLQAWIVSQKGPVFSALFNPLSAVIVTFFGALYLKEQTYLGSLLGALAIILGLYIVLWGKSEDYQEESTDLKLENEHNTSSQSDIVSIMIGDKAFRSSELLEPLLM.

Helical transmembrane passes span 10 to 30 (LALVMLQFTSAGVALFTKAAF), 37 to 57 (TVFVVYRQAIATLFICPISFI), 66 to 86 (PSLGVRGFWWVALTAVIGVTV), 103 to 123 (ACAMTNLIPAVTFIISIIVGF), 133 to 153 (SVAKVIGTGVCVGGAMAMTFL), 170 to 190 (WLLGCFFLLISTFAWSLWLIL), 204 to 224 (TSACTCFIATIASFLVALALG), 240 to 260 (SCCIYSGFQLAISFFLQAWIV), 266 to 286 (VFSALFNPLSAVIVTFFGALY), and 292 to 312 (YLGSLLGALAIILGLYIVLWG). In terms of domain architecture, EamA 1 spans 18-131 (TSAGVALFTK…GFESIKRRSM (114 aa)). One can recognise an EamA 2 domain in the interval 199-310 (PDHLYTSACT…AIILGLYIVL (112 aa)).

The protein belongs to the drug/metabolite transporter (DMT) superfamily. Plant drug/metabolite exporter (P-DME) (TC 2.A.7.4) family.

The protein resides in the membrane. The chain is WAT1-related protein At4g28040 from Arabidopsis thaliana (Mouse-ear cress).